A 334-amino-acid chain; its full sequence is Putative 2-hydroxyacid dehydrogenase UNK4.10 (334 aa).

Residues 166 to 167 (GI), 244 to 246 (TAR), and aspartate 270 each bind NAD(+). Arginine 246 is an active-site residue. The active site involves glutamate 275. Residue histidine 293 is the Proton donor of the active site. Residue 293-296 (HLGT) coordinates NAD(+).

The protein belongs to the D-isomer specific 2-hydroxyacid dehydrogenase family.

This is Putative 2-hydroxyacid dehydrogenase UNK4.10 from Schizosaccharomyces pombe (strain 972 / ATCC 24843) (Fission yeast).